Reading from the N-terminus, the 400-residue chain is Acetate kinase (400 aa).

A Mg(2+)-binding site is contributed by asparagine 8. Lysine 15 provides a ligand contact to ATP. Arginine 89 serves as a coordination point for substrate. The Proton donor/acceptor role is filled by aspartate 146. ATP contacts are provided by residues 206-210 (HVGNG), 283-285 (DMR), and 331-335 (GMGEN). Mg(2+) is bound at residue glutamate 383.

Belongs to the acetokinase family. In terms of assembly, homodimer. Mg(2+) is required as a cofactor. It depends on Mn(2+) as a cofactor.

The protein resides in the cytoplasm. The catalysed reaction is acetate + ATP = acetyl phosphate + ADP. The protein operates within metabolic intermediate biosynthesis; acetyl-CoA biosynthesis; acetyl-CoA from acetate: step 1/2. Catalyzes the formation of acetyl phosphate from acetate and ATP. Can also catalyze the reverse reaction. In Streptococcus equi subsp. zooepidemicus (strain MGCS10565), this protein is Acetate kinase.